The chain runs to 435 residues: Serine--tRNA ligase (435 aa).

242 to 244 serves as a coordination point for L-serine; sequence TAE. Position 273-275 (273-275) interacts with ATP; sequence RSE. Glutamate 296 is an L-serine binding site. 360-363 serves as a coordination point for ATP; it reads EISS. Serine 396 contributes to the L-serine binding site.

The protein belongs to the class-II aminoacyl-tRNA synthetase family. Type-1 seryl-tRNA synthetase subfamily. Homodimer. The tRNA molecule binds across the dimer.

The protein resides in the cytoplasm. The enzyme catalyses tRNA(Ser) + L-serine + ATP = L-seryl-tRNA(Ser) + AMP + diphosphate + H(+). It catalyses the reaction tRNA(Sec) + L-serine + ATP = L-seryl-tRNA(Sec) + AMP + diphosphate + H(+). It participates in aminoacyl-tRNA biosynthesis; selenocysteinyl-tRNA(Sec) biosynthesis; L-seryl-tRNA(Sec) from L-serine and tRNA(Sec): step 1/1. In terms of biological role, catalyzes the attachment of serine to tRNA(Ser). Is also able to aminoacylate tRNA(Sec) with serine, to form the misacylated tRNA L-seryl-tRNA(Sec), which will be further converted into selenocysteinyl-tRNA(Sec). This Vibrio atlanticus (strain LGP32) (Vibrio splendidus (strain Mel32)) protein is Serine--tRNA ligase.